Reading from the N-terminus, the 490-residue chain is Probable alcohol acetyltransferase FCK4 (490 aa).

It belongs to the alcohol acetyltransferase FCK4 family.

It participates in secondary metabolite biosynthesis. Its function is as follows. Probable alcohol acetyltransferase; part of the gene cluster that mediates the biosynthesis of cytokinins such as fusatin, fusatinic acids or 8-oxofusatin, known for their growth promoting and anti-senescence activities toward host plants. FCK1 is a bifunctional enzyme that performs the first steps in the biosynthesis of Fusarium cytokinins. It first condenses adenosine monophosphate (AMP) with dimethylallyl diphosphate (DMAPP) to yield isoprenyl adenosine monophosphate. It then catalyzes the removal of the phosphoribose to produce isopentenylaldehyde. The cytochrome P450 monooxygenase then converts isopentenylaldehyde to trans-zeatin. A condensation step converts trans-zeatin to fusatin which is further modified to produce fusatinic acid. The mechanism for oxidation of fusatin to fusatinic acid remains unknown. 8-oxofusatin could be produced through several pathways, via direct oxygenation of fusatin, or via the 8-oxo-pentenyladenine intermediate which itself must arise from either the prenylation of 8-oxo-AMP by FCK1 and/or oxygenation of isopentenylaldehyde. Both the FCK3 and FCK4 enzymes act downstream of the identified cytokinins to produce yet unidentified compounds. In Fusarium pseudograminearum (strain CS3096) (Wheat and barley crown-rot fungus), this protein is Probable alcohol acetyltransferase FCK4.